Consider the following 531-residue polypeptide: Dihydropyrimidinase (531 aa).

3 residues coordinate Zn(2+): H103, H105, and K193. K193 bears the N6-carboxylysine mark. Y198 is a substrate binding site. Zn(2+) is bound by residues H226 and H282. S332 provides a ligand contact to substrate. D359 provides a ligand contact to Zn(2+). Substrate is bound at residue N380.

The protein belongs to the metallo-dependent hydrolases superfamily. Hydantoinase/dihydropyrimidinase family. Homotetramer. Zn(2+) is required as a cofactor. Post-translationally, carboxylation allows a single lysine to coordinate two zinc ions.

The protein resides in the endoplasmic reticulum. It carries out the reaction 5,6-dihydrouracil + H2O = 3-(carbamoylamino)propanoate + H(+). The protein operates within amino-acid biosynthesis; beta-alanine biosynthesis. Catalyzes the second step of the reductive pyrimidine degradation, the reversible hydrolytic ring opening of dihydropyrimidines. Can catalyze the ring opening of 5,6-dihydrouracil to N-carbamoyl-alanine and of 5,6-dihydrothymine to N-carbamoyl-amino isobutyrate. Involved in the recycling of nitrogen from nucleobases to general nitrogen metabolism. This is Dihydropyrimidinase from Arabidopsis thaliana (Mouse-ear cress).